We begin with the raw amino-acid sequence, 475 residues long: Sulfate adenylyltransferase subunit 1 (475 aa).

The tr-type G domain maps to 25-239; it reads KSLLRFLTCG…EVLETVEIQR (215 aa). A G1 region spans residues 34 to 41; it reads GSVDDGKS. 34-41 serves as a coordination point for GTP; it reads GSVDDGKS. The G2 stretch occupies residues 92–96; it reads GITID. Positions 113-116 are G3; sequence DTPG. GTP-binding positions include 113–117 and 168–171; these read DTPGH and NKMD. The G4 stretch occupies residues 168 to 171; it reads NKMD. The tract at residues 206 to 208 is G5; it reads SAL.

Belongs to the TRAFAC class translation factor GTPase superfamily. Classic translation factor GTPase family. CysN/NodQ subfamily. As to quaternary structure, heterodimer composed of CysD, the smaller subunit, and CysN.

The catalysed reaction is sulfate + ATP + H(+) = adenosine 5'-phosphosulfate + diphosphate. Its pathway is sulfur metabolism; hydrogen sulfide biosynthesis; sulfite from sulfate: step 1/3. In terms of biological role, with CysD forms the ATP sulfurylase (ATPS) that catalyzes the adenylation of sulfate producing adenosine 5'-phosphosulfate (APS) and diphosphate, the first enzymatic step in sulfur assimilation pathway. APS synthesis involves the formation of a high-energy phosphoric-sulfuric acid anhydride bond driven by GTP hydrolysis by CysN coupled to ATP hydrolysis by CysD. In Escherichia fergusonii (strain ATCC 35469 / DSM 13698 / CCUG 18766 / IAM 14443 / JCM 21226 / LMG 7866 / NBRC 102419 / NCTC 12128 / CDC 0568-73), this protein is Sulfate adenylyltransferase subunit 1.